Consider the following 159-residue polypeptide: 2-C-methyl-D-erythritol 2,4-cyclodiphosphate synthase (159 aa).

Residues aspartate 10 and histidine 12 each contribute to the a divalent metal cation site. Residues aspartate 10–histidine 12 and histidine 36–serine 37 each bind 4-CDP-2-C-methyl-D-erythritol 2-phosphate. A divalent metal cation is bound at residue histidine 44. Residues aspartate 58–glycine 60, phenylalanine 63–aspartate 67, alanine 102–alanine 108, threonine 134–glutamate 137, phenylalanine 141, and arginine 144 each bind 4-CDP-2-C-methyl-D-erythritol 2-phosphate.

The protein belongs to the IspF family. Homotrimer. A divalent metal cation is required as a cofactor.

The catalysed reaction is 4-CDP-2-C-methyl-D-erythritol 2-phosphate = 2-C-methyl-D-erythritol 2,4-cyclic diphosphate + CMP. The protein operates within isoprenoid biosynthesis; isopentenyl diphosphate biosynthesis via DXP pathway; isopentenyl diphosphate from 1-deoxy-D-xylulose 5-phosphate: step 4/6. Its function is as follows. Involved in the biosynthesis of isopentenyl diphosphate (IPP) and dimethylallyl diphosphate (DMAPP), two major building blocks of isoprenoid compounds. Catalyzes the conversion of 4-diphosphocytidyl-2-C-methyl-D-erythritol 2-phosphate (CDP-ME2P) to 2-C-methyl-D-erythritol 2,4-cyclodiphosphate (ME-CPP) with a corresponding release of cytidine 5-monophosphate (CMP). The protein is 2-C-methyl-D-erythritol 2,4-cyclodiphosphate synthase of Cellvibrio japonicus (strain Ueda107) (Pseudomonas fluorescens subsp. cellulosa).